We begin with the raw amino-acid sequence, 243 residues long: Pyridoxine 5'-phosphate synthase (243 aa).

A 3-amino-2-oxopropyl phosphate-binding site is contributed by asparagine 9. Residue 11-12 (DH) coordinates 1-deoxy-D-xylulose 5-phosphate. Arginine 20 contacts 3-amino-2-oxopropyl phosphate. Histidine 45 functions as the Proton acceptor in the catalytic mechanism. 1-deoxy-D-xylulose 5-phosphate is bound by residues arginine 47 and histidine 52. Glutamate 72 acts as the Proton acceptor in catalysis. Threonine 102 is a binding site for 1-deoxy-D-xylulose 5-phosphate. Histidine 193 (proton donor) is an active-site residue. Residues glycine 194 and 215 to 216 (GH) contribute to the 3-amino-2-oxopropyl phosphate site.

It belongs to the PNP synthase family. In terms of assembly, homooctamer; tetramer of dimers.

The protein resides in the cytoplasm. It catalyses the reaction 3-amino-2-oxopropyl phosphate + 1-deoxy-D-xylulose 5-phosphate = pyridoxine 5'-phosphate + phosphate + 2 H2O + H(+). The protein operates within cofactor biosynthesis; pyridoxine 5'-phosphate biosynthesis; pyridoxine 5'-phosphate from D-erythrose 4-phosphate: step 5/5. Catalyzes the complicated ring closure reaction between the two acyclic compounds 1-deoxy-D-xylulose-5-phosphate (DXP) and 3-amino-2-oxopropyl phosphate (1-amino-acetone-3-phosphate or AAP) to form pyridoxine 5'-phosphate (PNP) and inorganic phosphate. The protein is Pyridoxine 5'-phosphate synthase of Yersinia pseudotuberculosis serotype I (strain IP32953).